A 67-amino-acid polypeptide reads, in one-letter code: Potassium channel toxin alpha-KTx 6.16 (67 aa).

Residues 1–24 (MNLKLALVLLLTVINVGMLPGATS) form the signal peptide. 4 cysteine pairs are disulfide-bonded: Cys-34–Cys-55, Cys-40–Cys-60, Cys-44–Cys-62, and Cys-50–Cys-65.

It belongs to the short scorpion toxin superfamily. Potassium channel inhibitor family. Alpha-KTx 06 subfamily. Expressed by the venom gland.

The protein resides in the secreted. Its function is as follows. Inhibits voltage-gated potassium channels. The sequence is that of Potassium channel toxin alpha-KTx 6.16 from Opisthacanthus cayaporum (South American scorpion).